Consider the following 505-residue polypeptide: Cyanidin 3-O-glucoside 7-O-glucosyltransferase (acyl-glucose) (505 aa).

An N-terminal signal peptide occupies residues 1–25 (MCPSFLVTLLLLQLSSLVVVLVVWA). A beta-D-glucoside is bound by residues Q52, H152, and 197–198 (NE). Residue E198 is the Proton donor of the active site. C217 and C225 are oxidised to a cystine. N224, N229, and N324 each carry an N-linked (GlcNAc...) asparagine glycan. Residues Y341 and E403 each coordinate a beta-D-glucoside. The active-site Nucleophile is E403. N-linked (GlcNAc...) asparagine glycosylation is found at N411 and N437. W447 and Y463 together coordinate a beta-D-glucoside. N494 carries an N-linked (GlcNAc...) asparagine glycan.

The protein belongs to the glycosyl hydrolase 1 family.

It is found in the vacuole. The enzyme catalyses 1-O-(4-hydroxy-3-methoxybenzoyl)-beta-D-glucose + cyanidin 3-O-beta-D-glucoside = cyanidin 3,7-di-O-beta-D-glucoside + vanillate. The protein operates within pigment biosynthesis; anthocyanin biosynthesis. Beta-glycosidase that catalyzes the transfer of glucose moiety to anthocyanidin 3-glucoside at the 7 position. Anthocyanins are ubiquitous colored pigments that are responsible for variations in petal color. The chain is Cyanidin 3-O-glucoside 7-O-glucosyltransferase (acyl-glucose) (AA7GT) from Delphinium grandiflorum (Siberian larkspur).